The primary structure comprises 672 residues: Glycine--tRNA ligase beta subunit (672 aa).

The protein belongs to the class-II aminoacyl-tRNA synthetase family. Tetramer of two alpha and two beta subunits.

Its subcellular location is the cytoplasm. The enzyme catalyses tRNA(Gly) + glycine + ATP = glycyl-tRNA(Gly) + AMP + diphosphate. The polypeptide is Glycine--tRNA ligase beta subunit (Thermotoga sp. (strain RQ2)).